A 537-amino-acid chain; its full sequence is Biotin carboxylase, chloroplastic (537 aa).

The N-terminal 71 residues, M1–C71, are a transit peptide targeting the chloroplast. ATP-binding positions include K188, K230, G236–G237, E272–V275, and H280. The 198-residue stretch at R192 to M389 folds into the ATP-grasp domain. K309 is a hydrogencarbonate binding site. E347 and E360 together coordinate ATP. Mg(2+) contacts are provided by E347, E360, and N362. Mn(2+)-binding residues include E347, E360, and N362. Residues R364, V367, and R410 each contribute to the hydrogencarbonate site. Residue R364 is part of the active site. R410 is a binding site for biotin.

In terms of assembly, acetyl-CoA carboxylase is a heterohexamer composed of biotin carboxyl carrier protein, biotin carboxylase and two subunits each of ACCase subunit alpha and ACCase plastid-coded subunit beta (accD). Mg(2+) serves as cofactor. Mn(2+) is required as a cofactor. As to expression, accumulates in fatty acids synthesizing tissues. Mostly expressed in siliques, developing leaves, and flowers, present in roots and embryos (especially at torpedo stage), and, to a lower extent, in mature leaves.

It is found in the plastid. The protein localises to the chloroplast. The catalysed reaction is N(6)-biotinyl-L-lysyl-[protein] + hydrogencarbonate + ATP = N(6)-carboxybiotinyl-L-lysyl-[protein] + ADP + phosphate + H(+). Its pathway is lipid metabolism; malonyl-CoA biosynthesis; malonyl-CoA from acetyl-CoA: step 1/1. Functionally, this protein is a component of the acetyl coenzyme A carboxylase complex; first, biotin carboxylase catalyzes the carboxylation of the carrier protein and then the transcarboxylase transfers the carboxyl group to form malonyl-CoA. The protein is Biotin carboxylase, chloroplastic (CAC2) of Arabidopsis thaliana (Mouse-ear cress).